A 76-amino-acid chain; its full sequence is Acyl carrier protein (76 aa).

Residues 1-76 form the Carrier domain; the sequence is MSIEERVKKI…SAIDYVQNNQ (76 aa). The residue at position 36 (Ser-36) is an O-(pantetheine 4'-phosphoryl)serine.

Belongs to the acyl carrier protein (ACP) family. In terms of processing, 4'-phosphopantetheine is transferred from CoA to a specific serine of apo-ACP by AcpS. This modification is essential for activity because fatty acids are bound in thioester linkage to the sulfhydryl of the prosthetic group.

The protein resides in the cytoplasm. Its pathway is lipid metabolism; fatty acid biosynthesis. Its function is as follows. Carrier of the growing fatty acid chain in fatty acid biosynthesis. The polypeptide is Acyl carrier protein (Actinobacillus succinogenes (strain ATCC 55618 / DSM 22257 / CCUG 43843 / 130Z)).